Consider the following 741-residue polypeptide: Phosphoribosylformylglycinamidine synthase subunit PurL (741 aa).

The active site involves His53. ATP-binding residues include Tyr56 and Lys95. Residue Glu97 coordinates Mg(2+). Residues 98 to 101 and Arg120 each bind substrate; that span reads SHNH. His99 acts as the Proton acceptor in catalysis. Asp121 is a Mg(2+) binding site. Gln244 is a substrate binding site. Position 274 (Asp274) interacts with Mg(2+). 318 to 320 is a binding site for substrate; it reads ESQ. ATP is bound by residues Asp501 and Gly538. Asn539 contacts Mg(2+). Residue Ser541 coordinates substrate.

It belongs to the FGAMS family. As to quaternary structure, monomer. Part of the FGAM synthase complex composed of 1 PurL, 1 PurQ and 2 PurS subunits.

The protein resides in the cytoplasm. The enzyme catalyses N(2)-formyl-N(1)-(5-phospho-beta-D-ribosyl)glycinamide + L-glutamine + ATP + H2O = 2-formamido-N(1)-(5-O-phospho-beta-D-ribosyl)acetamidine + L-glutamate + ADP + phosphate + H(+). It functions in the pathway purine metabolism; IMP biosynthesis via de novo pathway; 5-amino-1-(5-phospho-D-ribosyl)imidazole from N(2)-formyl-N(1)-(5-phospho-D-ribosyl)glycinamide: step 1/2. Functionally, part of the phosphoribosylformylglycinamidine synthase complex involved in the purines biosynthetic pathway. Catalyzes the ATP-dependent conversion of formylglycinamide ribonucleotide (FGAR) and glutamine to yield formylglycinamidine ribonucleotide (FGAM) and glutamate. The FGAM synthase complex is composed of three subunits. PurQ produces an ammonia molecule by converting glutamine to glutamate. PurL transfers the ammonia molecule to FGAR to form FGAM in an ATP-dependent manner. PurS interacts with PurQ and PurL and is thought to assist in the transfer of the ammonia molecule from PurQ to PurL. This chain is Phosphoribosylformylglycinamidine synthase subunit PurL, found in Latilactobacillus sakei subsp. sakei (strain 23K) (Lactobacillus sakei subsp. sakei).